We begin with the raw amino-acid sequence, 205 residues long: Putative glutamine amidotransferase-like protein L716 (205 aa).

The region spanning 1–176 is the Glutamine amidotransferase type-1 domain; sequence MLLIIQNGYI…SNHIESYDYA (176 aa). Residues cysteine 82, histidine 155, and aspartate 157 each act as for GATase activity in the active site.

In Acanthamoeba polyphaga mimivirus (APMV), this protein is Putative glutamine amidotransferase-like protein L716.